The chain runs to 190 residues: Holliday junction branch migration complex subunit RuvA (190 aa).

Residues 1–64 (MIGKLTGTLL…EDAQLLYGFG (64 aa)) are domain I. A domain II region spans residues 65–137 (TAQERQAFRE…LKGKLGADVG (73 aa)). The segment at 137–141 (GVRAH) is flexible linker. The tract at residues 142 to 190 (AANDNQADILQALLALGYNDKEAAAALKALPADVGVSEGIKLALKSLSK) is domain III.

This sequence belongs to the RuvA family. Homotetramer. Forms an RuvA(8)-RuvB(12)-Holliday junction (HJ) complex. HJ DNA is sandwiched between 2 RuvA tetramers; dsDNA enters through RuvA and exits via RuvB. An RuvB hexamer assembles on each DNA strand where it exits the tetramer. Each RuvB hexamer is contacted by two RuvA subunits (via domain III) on 2 adjacent RuvB subunits; this complex drives branch migration. In the full resolvosome a probable DNA-RuvA(4)-RuvB(12)-RuvC(2) complex forms which resolves the HJ.

Its subcellular location is the cytoplasm. Its function is as follows. The RuvA-RuvB-RuvC complex processes Holliday junction (HJ) DNA during genetic recombination and DNA repair, while the RuvA-RuvB complex plays an important role in the rescue of blocked DNA replication forks via replication fork reversal (RFR). RuvA specifically binds to HJ cruciform DNA, conferring on it an open structure. The RuvB hexamer acts as an ATP-dependent pump, pulling dsDNA into and through the RuvAB complex. HJ branch migration allows RuvC to scan DNA until it finds its consensus sequence, where it cleaves and resolves the cruciform DNA. This Acidovorax sp. (strain JS42) protein is Holliday junction branch migration complex subunit RuvA.